A 365-amino-acid polypeptide reads, in one-letter code: tRNA(Met) cytidine acetate ligase (365 aa).

Residues 7–20 (IAEF…HKYL), Gly-96, Asn-152, and Arg-175 contribute to the ATP site.

This sequence belongs to the TmcAL family.

It localises to the cytoplasm. It carries out the reaction cytidine(34) in elongator tRNA(Met) + acetate + ATP = N(4)-acetylcytidine(34) in elongator tRNA(Met) + AMP + diphosphate. Functionally, catalyzes the formation of N(4)-acetylcytidine (ac(4)C) at the wobble position of elongator tRNA(Met), using acetate and ATP as substrates. First activates an acetate ion to form acetyladenylate (Ac-AMP) and then transfers the acetyl group to tRNA to form ac(4)C34. The chain is tRNA(Met) cytidine acetate ligase from Streptococcus pneumoniae serotype 4 (strain ATCC BAA-334 / TIGR4).